A 469-amino-acid chain; its full sequence is 3-isopropylmalate dehydratase large subunit (469 aa).

Residues cysteine 347, cysteine 408, and cysteine 411 each contribute to the [4Fe-4S] cluster site.

Belongs to the aconitase/IPM isomerase family. LeuC type 1 subfamily. As to quaternary structure, heterodimer of LeuC and LeuD. It depends on [4Fe-4S] cluster as a cofactor.

The catalysed reaction is (2R,3S)-3-isopropylmalate = (2S)-2-isopropylmalate. It functions in the pathway amino-acid biosynthesis; L-leucine biosynthesis; L-leucine from 3-methyl-2-oxobutanoate: step 2/4. Catalyzes the isomerization between 2-isopropylmalate and 3-isopropylmalate, via the formation of 2-isopropylmaleate. The chain is 3-isopropylmalate dehydratase large subunit from Haemophilus influenzae (strain ATCC 51907 / DSM 11121 / KW20 / Rd).